A 194-amino-acid polypeptide reads, in one-letter code: Fibroblast growth factor 7 (194 aa).

The first 31 residues, 1–31 (MRKWILTWILPSLLYRSCFHIICLVGTISLA), serve as a signal peptide directing secretion. An N-linked (GlcNAc...) asparagine glycan is attached at Asn-45.

It belongs to the heparin-binding growth factors family. Interacts with FGFBP1. Interacts with FGFR2. Affinity between fibroblast growth factors (FGFs) and their receptors is increased by heparan sulfate glycosaminoglycans that function as coreceptors.

Its function is as follows. Plays an important role in the regulation of embryonic development, cell proliferation and cell differentiation. Required for normal branching morphogenesis. Growth factor active on keratinocytes. Possible major paracrine effector of normal epithelial cell proliferation. The protein is Fibroblast growth factor 7 (FGF7) of Ovis aries (Sheep).